The following is a 192-amino-acid chain: Orotate phosphoribosyltransferase (192 aa).

5-phospho-alpha-D-ribose 1-diphosphate is bound at residue 116 to 124 (EDIVTTGLS). The orotate site is built by Thr-120 and Arg-148.

This sequence belongs to the purine/pyrimidine phosphoribosyltransferase family. PyrE subfamily. Homodimer. Requires Mg(2+) as cofactor.

The enzyme catalyses orotidine 5'-phosphate + diphosphate = orotate + 5-phospho-alpha-D-ribose 1-diphosphate. It participates in pyrimidine metabolism; UMP biosynthesis via de novo pathway; UMP from orotate: step 1/2. Catalyzes the transfer of a ribosyl phosphate group from 5-phosphoribose 1-diphosphate to orotate, leading to the formation of orotidine monophosphate (OMP). The chain is Orotate phosphoribosyltransferase from Brucella canis (strain ATCC 23365 / NCTC 10854 / RM-666).